A 596-amino-acid polypeptide reads, in one-letter code: RNA-binding protein involved in heterochromatin assembly dri1 (596 aa).

Position 176 is a phosphoserine (S176). The RRM domain maps to 236–314; sequence KIVHVAGLTN…RMLEIIPSST (79 aa). The RanBP2-type 1 zinc finger occupies 335-364; it reads RPGDWNCPMCGFSNFQRRTSCFRCSFPGPT. The residue at position 429 (S429) is a Phosphoserine. 2 RanBP2-type zinc fingers span residues 437–468 and 552–580; these read RAGD…SRAT and DQGD…PHYS.

Interacts with dpb4. Interacts with chp1.

The protein resides in the chromosome. It localises to the nucleus. It is found in the cytoplasm. The protein localises to the cytoplasmic granule. Mediates heterochromatin assembly by promoting RNAi-mediated heterochromatin silencing and histone deacetylation. Binds pericetromeric transcripts and recruits the RNA-induced transcriptional silencing (RITS) complex to heterochromatin. Recruits sir2 to chromatin to promote deacetylation of 'Lys-9' of histone H3. Involved in bipolar spindle assembly during mitosis. Required for proper localization of kinesin-14/Klp2 on the spindle microtubules. The polypeptide is RNA-binding protein involved in heterochromatin assembly dri1 (Schizosaccharomyces pombe (strain 972 / ATCC 24843) (Fission yeast)).